A 475-amino-acid chain; its full sequence is UDP-N-acetylmuramate--L-alanine ligase (475 aa).

Position 125-131 (125-131) interacts with ATP; the sequence is GTHGKTT.

Belongs to the MurCDEF family.

The protein localises to the cytoplasm. The catalysed reaction is UDP-N-acetyl-alpha-D-muramate + L-alanine + ATP = UDP-N-acetyl-alpha-D-muramoyl-L-alanine + ADP + phosphate + H(+). It functions in the pathway cell wall biogenesis; peptidoglycan biosynthesis. Cell wall formation. The sequence is that of UDP-N-acetylmuramate--L-alanine ligase from Actinobacillus pleuropneumoniae serotype 5b (strain L20).